The following is a 551-amino-acid chain: Probable NADH-ubiquinone oxidoreductase C3A11.07, mitochondrial (551 aa).

A mitochondrion-targeting transit peptide spans 1–37; the sequence is MLFSRSILRGMPKAGIPKSPLALSASRNLRLANSVRF. 93-123 contacts FAD; that stretch reads TLVVLGAGWGATSILRTIDTSLFNVIVVSPR. 255–291 contributes to the NAD(+) binding site; it reads VHTVVVGGGPTGMEFAGEMADFIEDDLKSWYPELADD.

This sequence belongs to the NADH dehydrogenase family.

It is found in the mitochondrion. It catalyses the reaction a quinone + NADH + H(+) = a quinol + NAD(+). The catalysed reaction is a ubiquinone + NADH + H(+) = a ubiquinol + NAD(+). Its function is as follows. Catalyzes the oxidation of NADH. This Schizosaccharomyces pombe (strain 972 / ATCC 24843) (Fission yeast) protein is Probable NADH-ubiquinone oxidoreductase C3A11.07, mitochondrial.